A 437-amino-acid chain; its full sequence is Neomycin resistance protein (437 aa).

2 disordered regions span residues 161–285 (GQRG…EEEA) and 305–338 (VSGA…PVPD). The segment covering 203 to 229 (PPTGARSPGATAGARATASTSSSSVRS) has biased composition (low complexity). Over residues 324-338 (RRRHRGRRHGRPVPD) the composition is skewed to basic residues.

This sequence belongs to the Gram-positive plasmids replication protein type 1 family.

This is Neomycin resistance protein from Streptomyces cyanogenus.